Here is a 45-residue protein sequence, read N- to C-terminus: CMTICTMEYWPVCGSDGKTYPNKCHLTSTACTSQKDITVLHEGKC.

3 cysteine pairs are disulfide-bonded: Cys-1-Cys-31, Cys-5-Cys-24, and Cys-13-Cys-45. The 45-residue stretch at 1-45 folds into the Kazal-like domain; sequence CMTICTMEYWPVCGSDGKTYPNKCHLTSTACTSQKDITVLHEGKC.

It belongs to the conopeptide P-like superfamily. As to expression, expressed by the venom duct.

The protein localises to the secreted. Functionally, acts as a neurotoxin by inhibiting an ion channel. May also act as a serine protease inhibitor, since it possess the kazal serine protease inhibitor signature. This is Turripeptide OL11-like from Lophiotoma albina (Sea snail).